The primary structure comprises 410 residues: Multifunctional CCA protein (410 aa).

The ATP site is built by glycine 8 and arginine 11. The CTP site is built by glycine 8 and arginine 11. The Mg(2+) site is built by aspartate 21 and aspartate 23. 3 residues coordinate ATP: arginine 91, arginine 138, and arginine 141. CTP contacts are provided by arginine 91, arginine 138, and arginine 141. Residues 229-347 (TGVHQEMVSD…AQLALVCEAD (119 aa)) enclose the HD domain.

This sequence belongs to the tRNA nucleotidyltransferase/poly(A) polymerase family. Bacterial CCA-adding enzyme type 1 subfamily. In terms of assembly, monomer. Can also form homodimers and oligomers. Mg(2+) is required as a cofactor. Requires Ni(2+) as cofactor.

The catalysed reaction is a tRNA precursor + 2 CTP + ATP = a tRNA with a 3' CCA end + 3 diphosphate. The enzyme catalyses a tRNA with a 3' CCA end + 2 CTP + ATP = a tRNA with a 3' CCACCA end + 3 diphosphate. In terms of biological role, catalyzes the addition and repair of the essential 3'-terminal CCA sequence in tRNAs without using a nucleic acid template. Adds these three nucleotides in the order of C, C, and A to the tRNA nucleotide-73, using CTP and ATP as substrates and producing inorganic pyrophosphate. tRNA 3'-terminal CCA addition is required both for tRNA processing and repair. Also involved in tRNA surveillance by mediating tandem CCA addition to generate a CCACCA at the 3' terminus of unstable tRNAs. While stable tRNAs receive only 3'-terminal CCA, unstable tRNAs are marked with CCACCA and rapidly degraded. The sequence is that of Multifunctional CCA protein from Xanthomonas campestris pv. campestris (strain B100).